The sequence spans 539 residues: Chaperonin GroEL 1 (539 aa).

ATP-binding positions include 29–32 (TLGP), 86–90 (DGTTT), Gly413, and Asp495.

This sequence belongs to the chaperonin (HSP60) family. In terms of assembly, forms a cylinder of 14 subunits composed of two heptameric rings stacked back-to-back. Interacts with the co-chaperonin GroES.

It localises to the cytoplasm. It carries out the reaction ATP + H2O + a folded polypeptide = ADP + phosphate + an unfolded polypeptide.. In terms of biological role, together with its co-chaperonin GroES, plays an essential role in assisting protein folding. The GroEL-GroES system forms a nano-cage that allows encapsulation of the non-native substrate proteins and provides a physical environment optimized to promote and accelerate protein folding. The sequence is that of Chaperonin GroEL 1 from Mycobacterium bovis (strain ATCC BAA-935 / AF2122/97).